Reading from the N-terminus, the 176-residue chain is Adipose-secreted signaling protein (176 aa).

Residues Met1–Thr30 are disordered. Polar residues predominate over residues Glu20–Thr30.

This sequence belongs to the ADISSP family.

Functionally, may be involved in thermogenesis and glucose homeostasis. This Taeniopygia guttata (Zebra finch) protein is Adipose-secreted signaling protein.